The chain runs to 322 residues: tRNA uridine(34) hydroxylase (322 aa).

The Rhodanese domain maps to 125–219 (QDPDTIVIDA…YGKDPEVKGQ (95 aa)). The Cysteine persulfide intermediate role is filled by cysteine 179.

Belongs to the TrhO family.

The enzyme catalyses uridine(34) in tRNA + AH2 + O2 = 5-hydroxyuridine(34) in tRNA + A + H2O. Catalyzes oxygen-dependent 5-hydroxyuridine (ho5U) modification at position 34 in tRNAs. In Bacillus velezensis (strain DSM 23117 / BGSC 10A6 / LMG 26770 / FZB42) (Bacillus amyloliquefaciens subsp. plantarum), this protein is tRNA uridine(34) hydroxylase.